Here is a 410-residue protein sequence, read N- to C-terminus: Argininosuccinate synthase (410 aa).

ATP contacts are provided by residues Ala-13–Ser-21 and Ala-40. Positions 91 and 96 each coordinate L-citrulline. Gly-121 is a binding site for ATP. Thr-123, Asn-127, and Asp-128 together coordinate L-aspartate. Position 127 (Asn-127) interacts with L-citrulline. Positions 131, 182, 191, 267, and 279 each coordinate L-citrulline.

The protein belongs to the argininosuccinate synthase family. Type 1 subfamily. As to quaternary structure, homotetramer.

The protein resides in the cytoplasm. The catalysed reaction is L-citrulline + L-aspartate + ATP = 2-(N(omega)-L-arginino)succinate + AMP + diphosphate + H(+). It functions in the pathway amino-acid biosynthesis; L-arginine biosynthesis; L-arginine from L-ornithine and carbamoyl phosphate: step 2/3. The sequence is that of Argininosuccinate synthase from Maricaulis maris (strain MCS10) (Caulobacter maris).